The following is a 542-amino-acid chain: Chaperonin GroEL (542 aa).

Residues 29–32 (TLGP), 86–90 (DGTTT), G413, 476–478 (NAA), and D492 each bind ATP.

Belongs to the chaperonin (HSP60) family. In terms of assembly, forms a cylinder of 14 subunits composed of two heptameric rings stacked back-to-back. Interacts with the co-chaperonin GroES.

It localises to the cytoplasm. It catalyses the reaction ATP + H2O + a folded polypeptide = ADP + phosphate + an unfolded polypeptide.. In terms of biological role, together with its co-chaperonin GroES, plays an essential role in assisting protein folding. The GroEL-GroES system forms a nano-cage that allows encapsulation of the non-native substrate proteins and provides a physical environment optimized to promote and accelerate protein folding. The chain is Chaperonin GroEL from Lactococcus lactis subsp. cremoris (strain SK11).